Here is a 96-residue protein sequence, read N- to C-terminus: uncharacterized protein (96 aa).

Residues 1 to 19 (MKFLSALLLIVLLISVVFG) form the signal peptide. The N-linked (GlcNAc...) asparagine glycan is linked to asparagine 20. The segment covering 27–46 (AWATTTTGGTTGSQTSPATH) has biased composition (low complexity). Positions 27-58 (AWATTTTGGTTGSQTSPATHGGHGGNGGNGHS) are disordered. Over residues 47–56 (GGHGGNGGNG) the composition is skewed to gly residues.

It is found in the secreted. This is an uncharacterized protein from Dictyostelium discoideum (Social amoeba).